We begin with the raw amino-acid sequence, 153 residues long: Bacteriohemerythrin (153 aa).

Fe cation-binding residues include histidine 21, histidine 57, glutamate 61, histidine 76, histidine 80, histidine 115, and aspartate 120.

The protein belongs to the hemerythrin family. Monomer.

In terms of biological role, oxygen-binding protein. May be involved in a storage mechanism or for delivery to oxygen-requiring enzymes. The oxygen-binding site contains two iron atoms. The chain is Bacteriohemerythrin from Pseudomonas paraeruginosa (strain DSM 24068 / PA7) (Pseudomonas aeruginosa (strain PA7)).